The chain runs to 1862 residues: Transient receptor potential cation channel subfamily M member 7 (1862 aa).

The residue at position 1 (Met1) is an N-acetylmethionine. The Cytoplasmic portion of the chain corresponds to 1 to 850 (MSQKSWIEST…ITRKFYAFYH (850 aa)). Ser101 bears the Phosphoserine mark. Low complexity predominate over residues 544–554 (NRRSGRNASSS). The segment at 544-574 (NRRSGRNASSSTPQLRKSHETFGNRADKKEK) is disordered. The span at 560-573 (KSHETFGNRADKKE) shows a compositional bias: basic and acidic residues. The helical transmembrane segment at 851 to 876 (APIVKFWFNTLAYLGFLMLYTFVVLV) threads the bilayer. Residues 877–882 (QMEQLP) are Extracellular-facing. The helical transmembrane segment at 883–904 (SVQEWIVIAYIFTYAIEKIREV) threads the bilayer. The Cytoplasmic segment spans residues 905–923 (FMSEAGKISQKIKVWFSDY). A helical membrane pass occupies residues 924–943 (FNVSDTIAIISFFVGFGLRF). Residues 944–956 (GAKWNYINAYDNH) are Extracellular-facing. A helical membrane pass occupies residues 957 to 980 (VFVAGRLIYCLNIIFWYVRLLDFL). The Cytoplasmic segment spans residues 981–999 (AVNQQAGPYVMMIGKMVAN). The chain crosses the membrane as a helical span at residues 1000 to 1023 (MFYIVVIMALVLLSFGVPRKAILY). The Extracellular segment spans residues 1024 to 1025 (PH). Residues 1026 to 1066 (EEPSWSLAKDIVFHPYWMIFGEVYAYEIDVCANDSALPTIC) constitute an intramembrane region (pore-forming). Topologically, residues 1067–1069 (GPG) are extracellular. The chain crosses the membrane as a helical span at residues 1070-1098 (TWLTPFLQAVYLFVQYIIMVNLLIAFFNN). Residues 1099-1862 (VYLQVKAISN…EATNSVRLML (764 aa)) lie on the Cytoplasmic side of the membrane. Residues Cys1143, Cys1144, and Cys1146 are each lipidated (S-palmitoyl cysteine). Thr1163 carries the phosphothreonine modification. Phosphoserine occurs at positions 1191, 1193, 1224, 1255, and 1258. Residues 1198 to 1250 (RVTFERVEQMSIQIKEVGDRVNYIKRSLQSLDSQIGHLQDLSALTVDTLKTLT) are a coiled coil. Position 1265 is a phosphothreonine (Thr1265). Phosphoserine occurs at positions 1300, 1357, 1360, 1385, 1386, 1389, 1394, 1395, and 1403. The tract at residues 1380–1418 (NQKLGSSPNSSPHMSSPPTKFSVSTPSQPSCKSHLESTT) is disordered. Positions 1385–1397 (SSPNSSPHMSSPP) are enriched in low complexity. A compositionally biased stretch (polar residues) spans 1398–1410 (TKFSVSTPSQPSC). Residue Thr1404 is modified to Phosphothreonine. A phosphoserine mark is found at Ser1406 and Ser1445. Phosphothreonine is present on Thr1454. Phosphoserine is present on Ser1455. Phosphothreonine occurs at positions 1466 and 1470. The tract at residues 1485–1511 (TPTSLHSEQESCSRRASTEDSPDVDSR) is disordered. Phosphoserine occurs at positions 1491, 1497, 1501, 1510, and 1530. Residues 1491 to 1502 (SEQESCSRRAST) show a composition bias toward basic and acidic residues. The residue at position 1534 (Thr1534) is a Phosphothreonine. Ser1540 carries the post-translational modification Phosphoserine. Thr1548 carries the phosphothreonine modification. A phosphoserine mark is found at Ser1564 and Ser1566. Thr1580 is modified (phosphothreonine). In terms of domain architecture, Alpha-type protein kinase spans 1591–1821 (ILNNSMSSWS…CCRKLKLPDL (231 aa)). Phosphoserine is present on residues Ser1595 and Ser1612. 5 residues coordinate ADP: Gly1618, Gly1619, Leu1620, Arg1621, and Lys1645. Ser1657 carries the phosphoserine modification. Phosphothreonine is present on Thr1682. Residues Glu1717, Glu1718, and Met1720 each contribute to the ADP site. His1750 lines the Zn(2+) pocket. Asp1764 (proton acceptor) is an active-site residue. Asp1774 is a binding site for ADP. The residue at position 1776 (Ser1776) is a Phosphoserine. The Zn(2+) site is built by His1807, Cys1809, and Cys1813. Thr1827 is modified (phosphothreonine). The disordered stretch occupies residues 1840–1862 (DLNLQAGNSTKESEATNSVRLML). 2 positions are modified to phosphoserine: Ser1848 and Ser1857.

It in the C-terminal section; belongs to the protein kinase superfamily. Alpha-type protein kinase family. ALPK subfamily. The protein in the N-terminal section; belongs to the transient receptor (TC 1.A.4) family. LTrpC subfamily. TRPM7 sub-subfamily. As to quaternary structure, homodimer. Homotetramer. Forms heteromers with TRPM6; heteromeric channels are functionally different from the homomeric channels. Interacts with PLCB1. Zn(2+) serves as cofactor. Post-translationally, palmitoylated; palmitoylation at Cys-1143, Cys-1144 and Cys-1146 promotes TRPM7 trafficking from the Golgi to the surface membrane. Autophosphorylated; autophosphorylation regulates TRPM7 kinase activity towards its substrates. In terms of processing, the C-terminal kinase domain can be cleaved from the channel segment in a cell-type-specific fashion. TRPM7 is cleaved by caspase-8, dissociating the kinase from the ion-conducting pore. The cleaved kinase fragments (M7CKs) can translocate to the cell nucleus and binds chromatin-remodeling complex proteins in a Zn(2+)-dependent manner to ultimately phosphorylate specific Ser/Thr residues of histones.

The protein localises to the cell membrane. Its subcellular location is the cytoplasmic vesicle membrane. It is found in the nucleus. The catalysed reaction is L-seryl-[protein] + ATP = O-phospho-L-seryl-[protein] + ADP + H(+). It carries out the reaction L-threonyl-[protein] + ATP = O-phospho-L-threonyl-[protein] + ADP + H(+). It catalyses the reaction Mg(2+)(in) = Mg(2+)(out). The enzyme catalyses Ca(2+)(in) = Ca(2+)(out). The catalysed reaction is Zn(2+)(in) = Zn(2+)(out). Its activity is regulated as follows. Channel displays constitutive activity. Channel activity is negatively regulated by cytosolic Mg(2+), Mg-ATP, low intracellular pH. Resting free cytosolic Mg(2+) and Mg-ATP concentrations seem to be sufficient to block native TRPM7 channel activity. TRPM7 channel activity is highly dependent on membrane levels of phosphatidylinositol 4,5 bisphosphate (PIP2). PIP2 hydrolysis negatively regulates TRPM7 channel activity. TRPM7 kinase activity does not affect channel activity. The kinase activity is controlled through the autophosphorylation of a serine/threonine-rich region located N-terminal to the catalytic domain. In terms of biological role, bifunctional protein that combines an ion channel with an intrinsic kinase domain, enabling it to modulate cellular functions either by conducting ions through the pore or by phosphorylating downstream proteins via its kinase domain. The channel is highly permeable to divalent cations, specifically calcium (Ca2+), magnesium (Mg2+) and zinc (Zn2+) and mediates their influx. Controls a wide range of biological processes such as Ca2(+), Mg(2+) and Zn(2+) homeostasis, vesicular Zn(2+) release channel and intracellular Ca(2+) signaling, embryonic development, immune responses, cell motility, proliferation and differentiation. The C-terminal alpha-kinase domain autophosphorylates cytoplasmic residues of TRPM7. TRPM7 phosphorylates SMAD2, suggesting that TRPM7 kinase may play a role in activating SMAD signaling pathways. In vitro, TRPM7 kinase phosphorylates ANXA1 (annexin A1), myosin II isoforms and a variety of proteins with diverse cellular functions. The cleaved channel exhibits substantially higher current and potentiates Fas receptor signaling. Functionally, the C-terminal kinase domain can be cleaved from the channel segment in a cell-type-specific fashion. In immune cells, the TRPM7 kinase domain is clipped from the channel domain by caspases in response to Fas-receptor stimulation. The cleaved kinase fragments can translocate to the nucleus, and bind chromatin-remodeling complex proteins in a Zn(2+)-dependent manner to ultimately phosphorylate specific Ser/Thr residues of histones known to be functionally important for cell differentiation and embryonic development. This Rattus norvegicus (Rat) protein is Transient receptor potential cation channel subfamily M member 7.